The sequence spans 529 residues: Bifunctional purine biosynthesis protein PurH (529 aa).

Residues 1–148 (MQPPRPVRRA…KNHKDVAIVV (148 aa)) form the MGS-like domain.

Belongs to the PurH family.

It catalyses the reaction (6R)-10-formyltetrahydrofolate + 5-amino-1-(5-phospho-beta-D-ribosyl)imidazole-4-carboxamide = 5-formamido-1-(5-phospho-D-ribosyl)imidazole-4-carboxamide + (6S)-5,6,7,8-tetrahydrofolate. The enzyme catalyses IMP + H2O = 5-formamido-1-(5-phospho-D-ribosyl)imidazole-4-carboxamide. It participates in purine metabolism; IMP biosynthesis via de novo pathway; 5-formamido-1-(5-phospho-D-ribosyl)imidazole-4-carboxamide from 5-amino-1-(5-phospho-D-ribosyl)imidazole-4-carboxamide (10-formyl THF route): step 1/1. Its pathway is purine metabolism; IMP biosynthesis via de novo pathway; IMP from 5-formamido-1-(5-phospho-D-ribosyl)imidazole-4-carboxamide: step 1/1. In Sodalis glossinidius (strain morsitans), this protein is Bifunctional purine biosynthesis protein PurH.